The following is a 269-amino-acid chain: Gene 51 glycoprotein (269 aa).

Residues N53, N58, N74, and N78 are each glycosylated (N-linked (GlcNAc...) asparagine; by host). Disordered stretches follow at residues 67–87 (LSTS…TTPY) and 103–137 (MLNS…ASKN). Residues 76 to 87 (TSNTSYSQTTPY) show a composition bias toward low complexity. A compositionally biased stretch (polar residues) spans 103–112 (MLNSTPNKPL). Residues 113–136 (SSTKLTPKSQSSSQSTKTTKQASK) show a composition bias toward low complexity. Residues N137, N161, N170, and N191 are each glycosylated (N-linked (GlcNAc...) asparagine; by host).

This Saimiriine herpesvirus 2 (strain 11) (SaHV-2) protein is Gene 51 glycoprotein (51).